A 1216-amino-acid chain; its full sequence is ATP-dependent DNA helicase Q4 (1216 aa).

Disordered regions lie at residues glutamate 72–leucine 100 and asparagine 113–glycine 171. Polar residues-rich tracts occupy residues alanine 86–leucine 100 and leucine 114–threonine 137. Serine 179 and serine 181 each carry phosphoserine. A disordered region spans residues serine 235–leucine 340. 2 stretches are compositionally biased toward polar residues: residues glutamine 248–serine 262 and threonine 306–alanine 320. The CCHC-type zinc finger occupies aspartate 393–glutamine 410. Positions alanine 436–leucine 458 are disordered. In terms of domain architecture, Helicase ATP-binding spans isoleucine 506–phenylalanine 684. An ATP-binding site is contributed by leucine 519–serine 526. Positions aspartate 627–histidine 630 match the DEAH box motif. The Helicase C-terminal domain occupies aspartate 705–phenylalanine 872. Positions 875, 877, 906, and 909 each coordinate Zn(2+).

Belongs to the helicase family. RecQ subfamily. In terms of assembly, interacts with UBR1 and UBR2. Interacts with MCM10; this interaction regulates RECQL4 unwinding activity. Interacts with TOPBP1. Zn(2+) is required as a cofactor.

The protein localises to the cytoplasm. The protein resides in the nucleus. It carries out the reaction Couples ATP hydrolysis with the unwinding of duplex DNA by translocating in the 3'-5' direction.. The enzyme catalyses ATP + H2O = ADP + phosphate + H(+). Functionally, an ATP-dependent DNA helicase which unwinds dsDNA with a 3'-overhang in a 3'-5' direction. May play a role in development of the palate and the limbs. May modulate chromosome segregation. This chain is ATP-dependent DNA helicase Q4 (Recql4), found in Mus musculus (Mouse).